Reading from the N-terminus, the 341-residue chain is tRNA N6-adenosine threonylcarbamoyltransferase (341 aa).

Residues histidine 111 and histidine 115 each coordinate Fe cation. Substrate-binding positions include 134-138 (LVSGG), aspartate 167, glycine 180, and asparagine 276. Aspartate 304 lines the Fe cation pocket.

The protein belongs to the KAE1 / TsaD family. Fe(2+) serves as cofactor.

Its subcellular location is the cytoplasm. It catalyses the reaction L-threonylcarbamoyladenylate + adenosine(37) in tRNA = N(6)-L-threonylcarbamoyladenosine(37) in tRNA + AMP + H(+). Functionally, required for the formation of a threonylcarbamoyl group on adenosine at position 37 (t(6)A37) in tRNAs that read codons beginning with adenine. Is involved in the transfer of the threonylcarbamoyl moiety of threonylcarbamoyl-AMP (TC-AMP) to the N6 group of A37, together with TsaE and TsaB. TsaD likely plays a direct catalytic role in this reaction. This Pseudomonas putida (strain ATCC 700007 / DSM 6899 / JCM 31910 / BCRC 17059 / LMG 24140 / F1) protein is tRNA N6-adenosine threonylcarbamoyltransferase.